The sequence spans 167 residues: Antibacterial peptide PMAP-37 (167 aa).

An N-terminal signal peptide occupies residues 1–29 (METQRASLCLGRWSLWLLLLALVVPSASA). Residues 30 to 130 (QALSYREAVL…DITCNEIQSV (101 aa)) constitute a propeptide that is removed on maturation. Intrachain disulfides connect cysteine 85–cysteine 96 and cysteine 107–cysteine 124.

Belongs to the cathelicidin family.

Its subcellular location is the secreted. Exerts antimicrobial activity against both Gram-positive and negative bacteria with minimal inhibitory concentrations ranging over 1-4 micro molar. Its activity appears to be mediated by its ability to damage bacterial membranes. The chain is Antibacterial peptide PMAP-37 (PMAP37) from Sus scrofa (Pig).